The primary structure comprises 920 residues: Urea transporter 2 (920 aa).

The segment at 25–57 (FTSPSWPSTSPDTHPALPLLEMPEEKDLRSSNE) is disordered. Residues 26–39 (TSPSWPSTSPDTHP) show a composition bias toward low complexity. The segment covering 47 to 57 (PEEKDLRSSNE) has biased composition (basic and acidic residues). 9 helical membrane passes run 151–170 (WWTITGGLGTVVSTLTALAL), 176–196 (AIASGLHGYNGMLVGLLMAVF), 204–224 (WWLLFPVTFTAMSCPVLSSAL), 233–253 (LPVFTLPFNIAVTLYLAATGH), 272–291 (ITWTEMEMPLLLQAIPVGVG), 302–322 (GGVFLVALFISSPLICLHAAI), 346–366 (WSYNCVLSCIAIGGMFYALTW), 370–390 (LLALICALFCAYMEAAISNIM), and 392–412 (VVGVPPGTWAFCLATIIFLLL). The disordered stretch occupies residues 446 to 467 (EKAPSGGGGEHPPTAGPKVEEG). A Phosphoserine modification is found at S477. Transmembrane regions (helical) follow at residues 600–620 (GILIILGLFIQNPWWAISGCL), 638–658 (AIAAGFHGYNGVLVGLLMAVF), 666–686 (WWLLLPVIIMSMSCPILSSAL), and 695–715 (LPVFTLPFNITVTLYLAATGH). Residue N733 is glycosylated (N-linked (GlcNAc...) asparagine). The next 4 membrane-spanning stretches (helical) occupy residues 764 to 784 (GGIFLIALFISSPLICLHAAI), 803 to 823 (IYFGLCGFNSTLACIAIGGMF), 832 to 852 (LLAIACALFAAYLGAALANML), and 854 to 874 (VFGLPPCTWPFCLSALTFLLL).

This sequence belongs to the urea transporter family. In terms of assembly, interacts with SNAPIN which enhances its urea transport activity. In terms of tissue distribution, epressed in the inner medulla of the kidney (at protein level). As to expression, expressed in the kidney.

Its subcellular location is the apical cell membrane. The protein resides in the cell membrane. The catalysed reaction is urea(in) = urea(out). Inhibited by phloretin. Its function is as follows. Mediates the transport of urea driven by a concentration gradient across the cell membrane of the renal inner medullary collecting duct which is critical to the urinary concentrating mechanism. Mediates the transport of urea driven by a concentration gradient across the cell membrane of the kidney inner medullary collecting duct which is critical to the urinary concentrating mechanism. In Homo sapiens (Human), this protein is Urea transporter 2 (SLC14A2).